A 133-amino-acid chain; its full sequence is Ribosome-binding factor A (133 aa).

Belongs to the RbfA family. Monomer. Binds 30S ribosomal subunits, but not 50S ribosomal subunits or 70S ribosomes.

It is found in the cytoplasm. In terms of biological role, one of several proteins that assist in the late maturation steps of the functional core of the 30S ribosomal subunit. Associates with free 30S ribosomal subunits (but not with 30S subunits that are part of 70S ribosomes or polysomes). Required for efficient processing of 16S rRNA. May interact with the 5'-terminal helix region of 16S rRNA. This chain is Ribosome-binding factor A, found in Proteus mirabilis (strain HI4320).